A 181-amino-acid polypeptide reads, in one-letter code: Large ribosomal subunit protein uL16 (181 aa).

It belongs to the universal ribosomal protein uL16 family.

In Pyrococcus abyssi (strain GE5 / Orsay), this protein is Large ribosomal subunit protein uL16.